The primary structure comprises 294 residues: UPF0761 membrane protein MADE_1017605/MADE_1018330 (294 aa).

The next 6 helical transmembrane spans lie at 45–65, 99–119, 141–161, 182–202, 213–233, and 247–267; these read LLSLVPFIMVTFTIMSAFPAF, ASQMSAIGILSLLVVALMLIS, FAIYWMVITLGPMLIGSSVVV, FLLSLVPSGAALLAFAILYMV, AFVGAIVATIAFEITKSGFAL, and ALAVVPILFLWVYLSWIIVLF.

The protein belongs to the UPF0761 family.

The protein resides in the cell inner membrane. The protein is UPF0761 membrane protein MADE_1017605/MADE_1018330 of Alteromonas mediterranea (strain DSM 17117 / CIP 110805 / LMG 28347 / Deep ecotype).